Here is a 776-residue protein sequence, read N- to C-terminus: Heat shock protein 110 (776 aa).

The segment at 741–776 (ILNKKKPAAPAPPKKEEPQPAAGDQPQSQPGEMDVD) is disordered.

This sequence belongs to the heat shock protein 70 family.

The chain is Heat shock protein 110 from Caenorhabditis elegans.